Consider the following 396-residue polypeptide: Putative T-box protein 39 (396 aa).

Positions 11 to 192 (MAEEDRWKQW…KNSTYGNRLD (182 aa)) form a DNA-binding region, T-box. A disordered region spans residues 185 to 215 (STYGNRLDGGNKRKNTDSSEERTSKRSKNET). A compositionally biased stretch (basic and acidic residues) spans 193 to 215 (GGNKRKNTDSSEERTSKRSKNET).

The protein resides in the nucleus. This chain is Putative T-box protein 39 (tbx-39), found in Caenorhabditis elegans.